Consider the following 100-residue polypeptide: MINEERLLKVLLAPNISEKATTAAEANNTVVFKVATDATKAEIKAAVEKLFEVTVEGVNTLNVKGKVKRTGARFGRRNDWKKAYVTLAEGSDIDFVGAES.

It belongs to the universal ribosomal protein uL23 family. As to quaternary structure, part of the 50S ribosomal subunit. Contacts protein L29, and trigger factor when it is bound to the ribosome.

Its function is as follows. One of the early assembly proteins it binds 23S rRNA. One of the proteins that surrounds the polypeptide exit tunnel on the outside of the ribosome. Forms the main docking site for trigger factor binding to the ribosome. This is Large ribosomal subunit protein uL23 from Colwellia psychrerythraea (strain 34H / ATCC BAA-681) (Vibrio psychroerythus).